A 331-amino-acid polypeptide reads, in one-letter code: Terpene synthase 8 (331 aa).

Positions 97–102 match the DDxx(x)D/E motif motif; that stretch reads DDFYLE. The NDxxSxxxD/E motif signature appears at 228–236; the sequence is NDIYSFNKE.

This sequence belongs to the terpene synthase family.

In terms of biological role, terpene synthase that converts its substrate farnesyl diphosphate (FPP) into several yet unidentified sesquiterpenes. This is Terpene synthase 8 from Dictyostelium purpureum (Slime mold).